Consider the following 709-residue polypeptide: Methylmalonyl-CoA mutase (709 aa).

Substrate contacts are provided by residues 73-77 (TIRQY), 183-185 (TIQ), arginine 195, lysine 222, histidine 232, and 271-273 (RLS). Residues 579-709 (RPRMLVVKMG…ILDLIREARS (131 aa)) form the B12-binding domain. Histidine 592 serves as a coordination point for adenosylcob(III)alamin.

Belongs to the methylmalonyl-CoA mutase family. Homodimer. It depends on adenosylcob(III)alamin as a cofactor.

It catalyses the reaction (R)-methylmalonyl-CoA = succinyl-CoA. Its pathway is metabolic intermediate metabolism; propanoyl-CoA degradation; succinyl-CoA from propanoyl-CoA: step 3/3. Its function is as follows. Radical enzyme that catalyzes the transformation of (2R)-methylmalonyl-CoA to succinyl-CoA. Is involved in the ethylmalonyl-CoA pathway for acetyl-CoA assimilation required for R.sphaeroides growth on acetate as sole carbon source. This is Methylmalonyl-CoA mutase from Cereibacter sphaeroides (strain ATCC 17023 / DSM 158 / JCM 6121 / CCUG 31486 / LMG 2827 / NBRC 12203 / NCIMB 8253 / ATH 2.4.1.) (Rhodobacter sphaeroides).